The chain runs to 658 residues: Alkyldihydroxyacetonephosphate synthase, peroxisomal (658 aa).

Disordered stretches follow at residues 1 to 41 (MAEA…LRVL) and 63 to 86 (AASA…IPKK). The transit peptide at 1–58 (MAEAAAAAGGTGLGAGASYGSAADRDRDPDPDRAGRRLRVLSGHLLGRPREALSTNEC) directs the protein to the peroxisome. Basic and acidic residues predominate over residues 23–35 (ADRDRDPDPDRAG). Over residues 63-77 (AASAATAAPTATPAA) the composition is skewed to low complexity. Phosphoserine is present on Ser65. Thr74 is modified (phosphothreonine). Lys102 is modified (N6-acetyllysine). The region spanning 202-384 (FERIPDIVLW…TEATIKIRPV (183 aa)) is the FAD-binding PCMH-type domain. FAD-binding positions include 234-240 (PIGGGTS), 303-309 (DSLEFST), and 316-319 (TRAS). Lys347 is subject to N6-acetyllysine. 368–374 (EGTLGVI) lines the FAD pocket. Position 515 (Arg515) interacts with substrate. The Proton donor/acceptor role is filled by Tyr578. 2 important for enzyme activity regions span residues 615-617 (HHH) and 654-658 (NRNLL).

Belongs to the FAD-binding oxidoreductase/transferase type 4 family. As to quaternary structure, homodimer. FAD is required as a cofactor.

Its subcellular location is the peroxisome membrane. The protein localises to the peroxisome. It catalyses the reaction a long chain fatty alcohol + a 1-acylglycerone 3-phosphate = a 1-O-alkylglycerone 3-phosphate + a long-chain fatty acid + H(+). The enzyme catalyses hexadecan-1-ol + 1-hexadecanoylglycerone 3-phosphate = 1-O-hexadecylglycerone 3-phosphate + hexadecanoate + H(+). It carries out the reaction 1-hexadecanoylglycerone 3-phosphate + a long-chain fatty acid = a 1-acylglycerone 3-phosphate + hexadecanoate. It participates in glycerolipid metabolism; ether lipid biosynthesis. Functionally, catalyzes the exchange of the acyl chain in acyl-dihydroxyacetonephosphate (acyl-DHAP) for a long chain fatty alcohol, yielding the first ether linked intermediate, i.e. alkyl-dihydroxyacetonephosphate (alkyl-DHAP), in the pathway of ether lipid biosynthesis. This is Alkyldihydroxyacetonephosphate synthase, peroxisomal (AGPS) from Homo sapiens (Human).